Consider the following 166-residue polypeptide: Large ribosomal subunit protein uL10 (166 aa).

This sequence belongs to the universal ribosomal protein uL10 family. In terms of assembly, part of the ribosomal stalk of the 50S ribosomal subunit. The N-terminus interacts with L11 and the large rRNA to form the base of the stalk. The C-terminus forms an elongated spine to which L12 dimers bind in a sequential fashion forming a multimeric L10(L12)X complex.

Functionally, forms part of the ribosomal stalk, playing a central role in the interaction of the ribosome with GTP-bound translation factors. The sequence is that of Large ribosomal subunit protein uL10 from Streptococcus pneumoniae (strain ATCC 700669 / Spain 23F-1).